The sequence spans 359 residues: MRQILIAVAIAVAVSILLTPVLIRLFTRQGFGHEIREDGPPSHHKKRGTPSMGGVAIVAGIWASYFGTHLVGVVIDGKGPSASGLLVLGLATALGAVGFLDDLIKIRRARNLGLNKTAKTVGILVAAVLFGVLALQFRNVDGLTPGSAELSYVREIATVTLAPAVFVLFCVVVVSAWSNAVNFTDGLDGLAAGAMAMVCAAYVLITFWQFRNACATSPGVGCYNVRDPLDLAIIAAATAGACIGFLWWNAAPAKIFMGDTGSLALGGIIAGLSVTSRTEMLAVVLGALFVAEVTSVVVQILAFRTTGRRVFRMAPFHHHFELVGWAETTVIIRFWLLTAIACGLGVALFYSEWLTTVGA.

10 consecutive transmembrane segments (helical) span residues Gln3 to Ile23, Val55 to Ile75, Gly84 to Ile104, Thr117 to Phe137, Ile156 to Ala176, Leu190 to Phe210, Leu231 to Ala251, Ile255 to Thr275, Val283 to Phe303, and Val330 to Tyr350.

Belongs to the glycosyltransferase 4 family. MraY subfamily. The cofactor is Mg(2+).

The protein resides in the cell membrane. It catalyses the reaction UDP-N-acetyl-alpha-D-muramoyl-L-alanyl-gamma-D-glutamyl-meso-2,6-diaminopimeloyl-D-alanyl-D-alanine + di-trans,octa-cis-undecaprenyl phosphate = di-trans,octa-cis-undecaprenyl diphospho-N-acetyl-alpha-D-muramoyl-L-alanyl-D-glutamyl-meso-2,6-diaminopimeloyl-D-alanyl-D-alanine + UMP. It functions in the pathway cell wall biogenesis; peptidoglycan biosynthesis. Functionally, catalyzes the initial step of the lipid cycle reactions in the biosynthesis of the cell wall peptidoglycan: transfers peptidoglycan precursor phospho-MurNAc-pentapeptide from UDP-MurNAc-pentapeptide onto the lipid carrier undecaprenyl phosphate, yielding undecaprenyl-pyrophosphoryl-MurNAc-pentapeptide, known as lipid I. The sequence is that of Phospho-N-acetylmuramoyl-pentapeptide-transferase from Mycolicibacterium vanbaalenii (strain DSM 7251 / JCM 13017 / BCRC 16820 / KCTC 9966 / NRRL B-24157 / PYR-1) (Mycobacterium vanbaalenii).